Here is a 267-residue protein sequence, read N- to C-terminus: Ras-related protein Rab-36 (267 aa).

8 residues coordinate GTP: valine 68, glycine 69, lysine 70, threonine 71, serine 72, aspartate 83, tyrosine 86, and threonine 89. Residue threonine 71 coordinates Mg(2+). The short motif at 76–94 is the Switch 1 element; that stretch reads RLCKNVFDHDYKATIGVDF. Positions 89 and 112 each coordinate Mg(2+). The short motif at 113 to 132 is the Switch 2 element; sequence TAGQEKFKCIASAYYRGAQV. The GTP site is built by glycine 115, lysine 172, aspartate 174, serine 203, alanine 204, and lysine 205. 2 S-geranylgeranyl cysteine lipidation sites follow: cysteine 266 and cysteine 267.

It belongs to the small GTPase superfamily. Rab family. Requires Mg(2+) as cofactor.

It is found in the golgi apparatus membrane. It carries out the reaction GTP + H2O = GDP + phosphate + H(+). Regulated by guanine nucleotide exchange factors (GEFs) which promote the exchange of bound GDP for free GTP. Regulated by GTPase activating proteins (GAPs) which increase the GTP hydrolysis activity. Inhibited by GDP dissociation inhibitors (GDIs). Functionally, the small GTPases Rab are key regulators of intracellular membrane trafficking, from the formation of transport vesicles to their fusion with membranes. Rabs cycle between an inactive GDP-bound form and an active GTP-bound form that is able to recruit to membranes different sets of downstream effectors directly responsible for vesicle formation, movement, tethering and fusion. This Mus musculus (Mouse) protein is Ras-related protein Rab-36.